A 203-amino-acid chain; its full sequence is High frequency lysogenization protein HflD homolog (203 aa).

This sequence belongs to the HflD family.

The protein localises to the cytoplasm. It is found in the cell inner membrane. This chain is High frequency lysogenization protein HflD homolog, found in Aeromonas salmonicida (strain A449).